The sequence spans 506 residues: UBX domain-containing protein 4 (506 aa).

The segment at methionine 1–glutamate 199 is interaction with UBQLN1. Residues methionine 1–threonine 411 lie on the Cytoplasmic side of the membrane. 2 stretches are compositionally biased toward polar residues: residues serine 114 to alanine 136 and serine 177 to arginine 189. Positions serine 114–aspartate 193 are disordered. The 79-residue stretch at aspartate 313–leucine 391 folds into the UBX domain. The stretch at leucine 412–phenylalanine 432 is an intramembrane region. Residues serine 433–methionine 506 lie on the Cytoplasmic side of the membrane. A disordered region spans residues proline 437–methionine 506. Positions alanine 444–serine 456 are enriched in low complexity. Basic and acidic residues predominate over residues lysine 457–aspartate 489. Threonine 487 is modified (phosphothreonine). Residues asparagine 496 to methionine 506 show a composition bias toward polar residues.

Directly interacts with VCP. Interacts with UBQLN1. Forms a complex with VCP and UBQLN1.

The protein localises to the endoplasmic reticulum membrane. It is found in the nucleus envelope. Its function is as follows. Involved in endoplasmic reticulum-associated protein degradation (ERAD). Acts as a platform to recruit both UBQLN1 and VCP to the ER during ERAD. In Rattus norvegicus (Rat), this protein is UBX domain-containing protein 4 (Ubxn4).